The primary structure comprises 242 residues: Terpene cyclase dpfgB (242 aa).

Helical transmembrane passes span 15–37, 51–71, 75–95, 112–132, 141–161, 169–189, and 205–225; these read DVAW…NYVG, ALMA…IYPF, LEMY…YTAV, LPLI…ALAA, AWSA…QLLC, SYFL…QDIL, and LYIW…ICLW.

This sequence belongs to the paxB family.

It is found in the membrane. Its pathway is secondary metabolite biosynthesis; terpenoid biosynthesis. Its function is as follows. Terpene cyclase; part of the gene cluster that mediates the biosynthesis of diterpenoid pyrones. The first step of the pathway is the synthesis of the alpha-pyrone moiety by the polyketide synthase dpfgA via condensation of one acetyl-CoA starter unit with 3 malonyl-CoA units and 2 methylations. The alpha-pyrone is then combined with geranylgeranyl pyrophosphate (GGPP) formed by the GGPP synthase dpfgD through the action of the prenyltransferase dpfgC to yield a linear alpha-pyrone diterpenoid. Subsequent steps in the diterpenoid pyrone biosynthetic pathway involve the decalin core formation, which is initiated by the epoxidation of the C10-C11 olefin by the FAD-dependent oxidoreductase dpfgE, and is followed by a cyclization cascade catalyzed by the terpene cyclase dpfgB. The short chain dehydrogenase/reductase dpfgG then oxidizes the 8S hydroxy group to a ketone and the short chain dehydrogenase/reductase dpfgH reduces the ketone to the 8R hydroxy group to yield higginsianin B. Higginsianin B is further methylated by the methyltransferase dpfgI to produce the intermediate named FDDP B. The cytochrome P450 monooxygenase dfgpJ then catalyzes a three-step oxidation at C-27 to generate a carboxylic acid as well as C-26 hydroxylation. Finally, methyltransferase dpfgK methylates the carboxylic acid generated by dpfgJ, yielding the final diterpenoid pyrones from the pathway which were named FDDP D and FDDP E. This chain is Terpene cyclase dpfgB, found in Gibberella zeae (strain ATCC MYA-4620 / CBS 123657 / FGSC 9075 / NRRL 31084 / PH-1) (Wheat head blight fungus).